A 112-amino-acid chain; its full sequence is Cell cycle protein GpsB (112 aa).

The stretch at 32 to 75 forms a coiled coil; sequence LDDIIKDYETYISTIEELRQENTRLKEEVKQAKKRQEAAQTTVS.

The protein belongs to the GpsB family. In terms of assembly, forms polymers through the coiled coil domains. Interacts with PBP1, MreC and EzrA.

The protein resides in the cytoplasm. Divisome component that associates with the complex late in its assembly, after the Z-ring is formed, and is dependent on DivIC and PBP2B for its recruitment to the divisome. Together with EzrA, is a key component of the system that regulates PBP1 localization during cell cycle progression. Its main role could be the removal of PBP1 from the cell pole after pole maturation is completed. Also contributes to the recruitment of PBP1 to the division complex. Not essential for septum formation. The protein is Cell cycle protein GpsB of Streptococcus mutans serotype c (strain ATCC 700610 / UA159).